The following is a 116-amino-acid chain: NADPH-dependent 7-cyano-7-deazaguanine reductase (116 aa).

Cysteine 31 functions as the Thioimide intermediate in the catalytic mechanism. The Proton donor role is filled by aspartate 38. Residues 53–55 and 72–73 each bind substrate; these read IEL and YE.

Belongs to the GTP cyclohydrolase I family. QueF type 1 subfamily.

The protein resides in the cytoplasm. The catalysed reaction is 7-aminomethyl-7-carbaguanine + 2 NADP(+) = 7-cyano-7-deazaguanine + 2 NADPH + 3 H(+). Its pathway is tRNA modification; tRNA-queuosine biosynthesis. Functionally, catalyzes the NADPH-dependent reduction of 7-cyano-7-deazaguanine (preQ0) to 7-aminomethyl-7-deazaguanine (preQ1). The protein is NADPH-dependent 7-cyano-7-deazaguanine reductase of Chlorobium luteolum (strain DSM 273 / BCRC 81028 / 2530) (Pelodictyon luteolum).